A 297-amino-acid chain; its full sequence is ATP phosphoribosyltransferase (297 aa).

Residue M1 is modified to N-acetylmethionine.

Belongs to the ATP phosphoribosyltransferase family.

Its subcellular location is the cytoplasm. It catalyses the reaction 1-(5-phospho-beta-D-ribosyl)-ATP + diphosphate = 5-phospho-alpha-D-ribose 1-diphosphate + ATP. Its pathway is amino-acid biosynthesis; L-histidine biosynthesis; L-histidine from 5-phospho-alpha-D-ribose 1-diphosphate: step 1/9. Functionally, catalyzes the condensation of ATP and 5-phosphoribose 1-diphosphate to form N'-(5'-phosphoribosyl)-ATP (PR-ATP). Has a crucial role in the pathway because the rate of histidine biosynthesis seems to be controlled primarily by regulation of the enzymatic activity. This is ATP phosphoribosyltransferase (HIS1) from Saccharomyces cerevisiae (strain ATCC 204508 / S288c) (Baker's yeast).